We begin with the raw amino-acid sequence, 160 residues long: Small ribosomal subunit protein uS7 (160 aa).

The protein belongs to the universal ribosomal protein uS7 family. Part of the 30S ribosomal subunit. Contacts proteins S9 and S11.

Its function is as follows. One of the primary rRNA binding proteins, it binds directly to 16S rRNA where it nucleates assembly of the head domain of the 30S subunit. Is located at the subunit interface close to the decoding center, probably blocks exit of the E-site tRNA. This chain is Small ribosomal subunit protein uS7, found in Hydrogenobaculum sp. (strain Y04AAS1).